Reading from the N-terminus, the 234-residue chain is MEFTPRLQQGILLRRYKRFLADVQLSDGSEITLHCPNTGSMRNCLYPGETVWFSTSDNPKRKYAHTWELMTTPDSGLIGIHSGQANTLAEEAINKGIIKELTGYDSLSREVKYGDENSRIDILLQGAQKPACYIEVKSCTLLEDGQGYFPDAVSLRGQKHLRELMHMVSQGHRAVLLFVVQHSDIFSVAPAAHIDPEYAKLLKKAVLAGVEVLAYRCEMSPTEIHLAQACVVRV.

The protein belongs to the SfsA family.

In Shewanella baltica (strain OS155 / ATCC BAA-1091), this protein is Sugar fermentation stimulation protein homolog.